Reading from the N-terminus, the 622-residue chain is Threonine--tRNA ligase (622 aa).

An editing domain region spans residues Met-1–Glu-141. The catalytic stretch occupies residues Pro-199–Pro-498. Residues Cys-291, His-343, and His-467 each coordinate Zn(2+).

Belongs to the class-II aminoacyl-tRNA synthetase family. In terms of assembly, homodimer. Zn(2+) serves as cofactor.

The protein resides in the cytoplasm. The catalysed reaction is tRNA(Thr) + L-threonine + ATP = L-threonyl-tRNA(Thr) + AMP + diphosphate + H(+). Catalyzes the attachment of threonine to tRNA(Thr) in a two-step reaction: L-threonine is first activated by ATP to form Thr-AMP and then transferred to the acceptor end of tRNA(Thr). Also edits incorrectly charged L-seryl-tRNA(Thr). The polypeptide is Threonine--tRNA ligase (Methanococcus maripaludis (strain C6 / ATCC BAA-1332)).